Here is a 459-residue protein sequence, read N- to C-terminus: V-type ATP synthase beta chain (459 aa).

The protein belongs to the ATPase alpha/beta chains family.

Functionally, produces ATP from ADP in the presence of a proton gradient across the membrane. The V-type beta chain is a regulatory subunit. The protein is V-type ATP synthase beta chain of Thermoanaerobacter pseudethanolicus (strain ATCC 33223 / 39E) (Clostridium thermohydrosulfuricum).